Here is a 69-residue protein sequence, read N- to C-terminus: uncharacterized protein (69 aa).

The disordered stretch occupies residues 21–42 (MYAANKKSDARRRGKVGKEQWE). Positions 35-69 (KVGKEQWEKEMEQYNIQKAQFEKELKEKKEKELKK) form a coiled coil.

This is an uncharacterized protein from Acheta domesticus (House cricket).